The sequence spans 159 residues: Protransforming growth factor alpha (159 aa).

A signal peptide spans 1 to 23 (MVPATGQLALLALGILLAVCQAL). Positions 24-38 (ENSTSPLSDSPVAAA) are cleaved as a propeptide — removed in mature form. The Extracellular portion of the chain corresponds to 24–97 (ENSTSPLSDS…AVVAASQKKQ (74 aa)). Residue asparagine 25 is glycosylated (N-linked (GlcNAc...) asparagine). In terms of domain architecture, EGF-like spans 44-83 (NKCPDSHTQYCFHGTCRFLVQEEKPACVCHSGYVGVRCEH). 3 disulfide bridges follow: cysteine 46–cysteine 59, cysteine 54–cysteine 70, and cysteine 72–cysteine 81. A propeptide spans 89-159 (VVAASQKKQA…TACCHSETVV (71 aa)) (removed in mature form). Residues 98-123 (AITALVVVSIVALAVLIITCVLIHCC) form a helical membrane-spanning segment. Topologically, residues 124-159 (QLRKHCEWCRALVCRHEKPSALLKGRTACCHSETVV) are cytoplasmic. 2 S-palmitoyl cysteine lipidation sites follow: cysteine 152 and cysteine 153.

As to quaternary structure, interacts with the PDZ domains of SDCBP and SNTA1. The interaction with SDCBP, is required for the targeting to the cell surface. In the endoplasmic reticulum, in its immature form (i.e. with a prosegment and lacking full N-glycosylation), interacts with CNIH. In the Golgi apparatus, may form a complex with CNIH and GORASP2. Interacts (via cytoplasmic C-terminal domain) with NKD2. Interacts with MAGI3.

It is found in the secreted. It localises to the extracellular space. Its subcellular location is the cell membrane. Functionally, TGF alpha is a mitogenic polypeptide that is able to bind to the EGF receptor/EGFR and to act synergistically with TGF beta to promote anchorage-independent cell proliferation in soft agar. The polypeptide is Protransforming growth factor alpha (Tgfa) (Mus musculus (Mouse)).